The following is a 506-amino-acid chain: Histidine ammonia-lyase (506 aa).

The segment at residues 144–146 is a cross-link (5-imidazolinone (Ala-Gly)); that stretch reads ASG. Position 145 is a 2,3-didehydroalanine (Ser) (S145).

It belongs to the PAL/histidase family. Post-translationally, contains an active site 4-methylidene-imidazol-5-one (MIO), which is formed autocatalytically by cyclization and dehydration of residues Ala-Ser-Gly.

It localises to the cytoplasm. It carries out the reaction L-histidine = trans-urocanate + NH4(+). Its pathway is amino-acid degradation; L-histidine degradation into L-glutamate; N-formimidoyl-L-glutamate from L-histidine: step 1/3. The chain is Histidine ammonia-lyase from Legionella pneumophila (strain Lens).